The chain runs to 600 residues: Proline--tRNA ligase (600 aa).

Belongs to the class-II aminoacyl-tRNA synthetase family. ProS type 1 subfamily. As to quaternary structure, homodimer.

The protein resides in the cytoplasm. The catalysed reaction is tRNA(Pro) + L-proline + ATP = L-prolyl-tRNA(Pro) + AMP + diphosphate. Functionally, catalyzes the attachment of proline to tRNA(Pro) in a two-step reaction: proline is first activated by ATP to form Pro-AMP and then transferred to the acceptor end of tRNA(Pro). As ProRS can inadvertently accommodate and process non-cognate amino acids such as alanine and cysteine, to avoid such errors it has two additional distinct editing activities against alanine. One activity is designated as 'pretransfer' editing and involves the tRNA(Pro)-independent hydrolysis of activated Ala-AMP. The other activity is designated 'posttransfer' editing and involves deacylation of mischarged Ala-tRNA(Pro). The misacylated Cys-tRNA(Pro) is not edited by ProRS. The protein is Proline--tRNA ligase of Prochlorococcus marinus (strain MIT 9211).